A 501-amino-acid chain; its full sequence is COP9 signalosome complex subunit 3 (501 aa).

Positions 275–445 (RFEDALFLLE…VFWTELSPVP (171 aa)) constitute a PCI domain.

The protein belongs to the CSN3 family. In terms of assembly, component of the CSN complex, probably composed of csn-1, csn-2, csn-3, csn-4, csn-5, csn-6 and csn-7. Within the complex it probably interacts directly with csn-2 and csn-4. May interact with itself.

It is found in the cytoplasm. It localises to the nucleus. Component of the COP9 signalosome complex (CSN), a complex involved in various cellular and developmental processes. The CSN complex is an essential regulator of the ubiquitin (Ubl) conjugation pathway by mediating the deneddylation of the cullin subunits of the SCF-type E3 ligase complexes, leading to decrease the Ubl ligase activity of SCF. The CSN complex plays an essential role in embryogenesis and oogenesis and is required to regulate microtubule stability in the early embryo. Mediates mei-3/katanin targeting for degradation at the meiosis to mitosis transition via deneddylation of cul-3. This Caenorhabditis elegans protein is COP9 signalosome complex subunit 3 (csn-3).